We begin with the raw amino-acid sequence, 193 residues long: Cysteine and glycine-rich protein 1 (193 aa).

An LIM zinc-binding 1 domain is found at cysteine 10–cysteine 61. The Nuclear localization signal motif lies at lysine 64–lysine 69. A Phosphoserine modification is found at serine 81. Lysine 84 carries the N6-acetyllysine modification. A Glycyl lysine isopeptide (Lys-Gly) (interchain with G-Cter in SUMO2) cross-link involves residue lysine 91. N6-acetyllysine occurs at positions 112, 131, 137, and 161. An LIM zinc-binding 2 domain is found at cysteine 119 to cysteine 170. Residue serine 192 is modified to Phosphoserine.

As to quaternary structure, interacts with ASCC1; ASCC2 and TRIP4.

Its subcellular location is the nucleus. Functionally, could play a role in neuronal development. The protein is Cysteine and glycine-rich protein 1 (Csrp1) of Rattus norvegicus (Rat).